We begin with the raw amino-acid sequence, 323 residues long: Olfactory receptor 6T1 (323 aa).

At 1–25 the chain is on the extracellular side; sequence MNPENWTQVTSFVLLGFPSSHLIQF. Asparagine 5 is a glycosylation site (N-linked (GlcNAc...) asparagine). Residues 26 to 46 form a helical membrane-spanning segment; sequence LVFLGLMVTYIVTATGKLLII. Topologically, residues 47–54 are cytoplasmic; the sequence is VLSWIDQR. A helical transmembrane segment spans residues 55–75; that stretch reads LHIQMYFFLRNFSFLELLLVT. Topologically, residues 76 to 99 are extracellular; that stretch reads VVVPKMLVVILTGDHTISFVSCII. Cysteine 97 and cysteine 189 are disulfide-bonded. Residues 100–120 form a helical membrane-spanning segment; it reads QSYLYFFLGTTDFFLLAVMSL. At 121 to 139 the chain is on the cytoplasmic side; the sequence is DRYLAICRPLRYETLMNGH. The chain crosses the membrane as a helical span at residues 140-160; sequence VCSQLVLASWLAGFLWVLCPT. Residues 161–197 are Extracellular-facing; it reads VLMASLPFCGPNGIDHFFRDSWPLLRLSCGDTHLLKL. Residues 198–217 form a helical membrane-spanning segment; it reads VAFMLSTLVLLGSLALTSVS. At 218–237 the chain is on the cytoplasmic side; the sequence is YACILATVLRAPTAAERRKA. A helical transmembrane segment spans residues 238-258; that stretch reads FSTCASHLTVVVIIYGSSIFL. Residues 259–271 are Extracellular-facing; it reads YIRMSEAQSKLLN. Residues 272–292 traverse the membrane as a helical segment; sequence KGASVLSCIITPLLNPFIFTL. The Cytoplasmic portion of the chain corresponds to 293-323; sequence RNDKVQQALREALGWPRLTAVMKLRVTSQRK.

Belongs to the G-protein coupled receptor 1 family.

Its subcellular location is the cell membrane. Functionally, odorant receptor. This chain is Olfactory receptor 6T1 (OR6T1), found in Homo sapiens (Human).